We begin with the raw amino-acid sequence, 370 residues long: Phosphoserine aminotransferase (370 aa).

An L-glutamate-binding site is contributed by Arg42. The pyridoxal 5'-phosphate site is built by Trp108, Thr158, Asp182, and Gln205. An N6-(pyridoxal phosphate)lysine modification is found at Lys206. Pyridoxal 5'-phosphate is bound at residue 247–248 (NT).

This sequence belongs to the class-V pyridoxal-phosphate-dependent aminotransferase family. SerC subfamily. As to quaternary structure, homodimer. The cofactor is pyridoxal 5'-phosphate.

It localises to the cytoplasm. The catalysed reaction is O-phospho-L-serine + 2-oxoglutarate = 3-phosphooxypyruvate + L-glutamate. The enzyme catalyses 4-(phosphooxy)-L-threonine + 2-oxoglutarate = (R)-3-hydroxy-2-oxo-4-phosphooxybutanoate + L-glutamate. It functions in the pathway amino-acid biosynthesis; L-serine biosynthesis; L-serine from 3-phospho-D-glycerate: step 2/3. It participates in cofactor biosynthesis; pyridoxine 5'-phosphate biosynthesis; pyridoxine 5'-phosphate from D-erythrose 4-phosphate: step 3/5. Its function is as follows. Catalyzes the reversible conversion of 3-phosphohydroxypyruvate to phosphoserine and of 3-hydroxy-2-oxo-4-phosphonooxybutanoate to phosphohydroxythreonine. The chain is Phosphoserine aminotransferase from Albidiferax ferrireducens (strain ATCC BAA-621 / DSM 15236 / T118) (Rhodoferax ferrireducens).